The sequence spans 173 residues: Crossover junction endodeoxyribonuclease RuvC (173 aa).

Residues aspartate 8, glutamate 67, and aspartate 139 contribute to the active site. Aspartate 8, glutamate 67, and aspartate 139 together coordinate Mg(2+).

This sequence belongs to the RuvC family. Homodimer which binds Holliday junction (HJ) DNA. The HJ becomes 2-fold symmetrical on binding to RuvC with unstacked arms; it has a different conformation from HJ DNA in complex with RuvA. In the full resolvosome a probable DNA-RuvA(4)-RuvB(12)-RuvC(2) complex forms which resolves the HJ. Mg(2+) serves as cofactor.

The protein localises to the cytoplasm. The catalysed reaction is Endonucleolytic cleavage at a junction such as a reciprocal single-stranded crossover between two homologous DNA duplexes (Holliday junction).. Functionally, the RuvA-RuvB-RuvC complex processes Holliday junction (HJ) DNA during genetic recombination and DNA repair. Endonuclease that resolves HJ intermediates. Cleaves cruciform DNA by making single-stranded nicks across the HJ at symmetrical positions within the homologous arms, yielding a 5'-phosphate and a 3'-hydroxyl group; requires a central core of homology in the junction. The consensus cleavage sequence is 5'-(A/T)TT(C/G)-3'. Cleavage occurs on the 3'-side of the TT dinucleotide at the point of strand exchange. HJ branch migration catalyzed by RuvA-RuvB allows RuvC to scan DNA until it finds its consensus sequence, where it cleaves and resolves the cruciform DNA. In Shewanella woodyi (strain ATCC 51908 / MS32), this protein is Crossover junction endodeoxyribonuclease RuvC.